Here is an 822-residue protein sequence, read N- to C-terminus: Putative ESX-1 scaffolding and assembly protein SaeB (822 aa).

May be involved in assembly of the ESX-1 / type VII specialized secretion system (T7SS), which exports several proteins including EsxA and EsxB. Involved in DNA conjugation in recipient (MDK8) but not donor (mc(2)155) strain. In Mycolicibacterium smegmatis (strain ATCC 700084 / mc(2)155) (Mycobacterium smegmatis), this protein is Putative ESX-1 scaffolding and assembly protein SaeB.